The primary structure comprises 480 residues: Iron-sulfur cluster assembly SufBD family protein slr0074 (480 aa).

It belongs to the iron-sulfur cluster assembly SufBD family.

The chain is Iron-sulfur cluster assembly SufBD family protein slr0074 from Synechocystis sp. (strain ATCC 27184 / PCC 6803 / Kazusa).